The following is a 228-amino-acid chain: 2,3-bisphosphoglycerate-dependent phosphoglycerate mutase (228 aa).

Substrate contacts are provided by residues 8 to 15 (RHGQSQWN), 21 to 22 (TG), R60, 87 to 90 (ERHY), K98, 114 to 115 (RR), and 180 to 181 (GN). The active-site Tele-phosphohistidine intermediate is H9. The active-site Proton donor/acceptor is E87.

Belongs to the phosphoglycerate mutase family. BPG-dependent PGAM subfamily. Homodimer.

The catalysed reaction is (2R)-2-phosphoglycerate = (2R)-3-phosphoglycerate. It participates in carbohydrate degradation; glycolysis; pyruvate from D-glyceraldehyde 3-phosphate: step 3/5. Its function is as follows. Catalyzes the interconversion of 2-phosphoglycerate and 3-phosphoglycerate. The protein is 2,3-bisphosphoglycerate-dependent phosphoglycerate mutase of Erythrobacter litoralis (strain HTCC2594).